Here is a 310-residue protein sequence, read N- to C-terminus: MESTQQMVSSIINTSFEAAVVAATSTLELMGIQYDYNEVFTRVKSKFDYVMDDSGVKNNLLGKAITIDQALNGKFGSAIRNRNWMTDSKTVAKLDEDVNKLRMTLSSKGIDQKMRVLNACFSVKRIPGKSSSIIKCTRLMKDKIERGEVEVDDSYVDEKMEIDTIDWKSRYDQLEKRFESLKQRVSEKYNTWVQKAKKVNENMYSLQNVISQQQNQIADLQQYCNKLEADLQGKFSSLVSSVEWYLRSMELSDDVKNDIEQQLNSIDLINPINAIDDIESLIRNLIQDYDRTFLMLKGLLKQCNYEYAYE.

Residues 1-146 are RNA-binding; the sequence is MESTQQMVSS…TRLMKDKIER (146 aa). The segment at 147–203 is dimerization; that stretch reads GEVEVDDSYVDEKMEIDTIDWKSRYDQLEKRFESLKQRVSEKYNTWVQKAKKVNENM. The stretch at 163–234 forms a coiled coil; the sequence is DTIDWKSRYD…NKLEADLQGK (72 aa). Residues 167–231 form an interaction with host ZC3H7B region; that stretch reads WKSRYDQLEK…QYCNKLEADL (65 aa). Residues 205–310 form an interaction with host EIF4G1 region; the sequence is SLQNVISQQQ…KQCNYEYAYE (106 aa).

It belongs to the rotavirus NSP3 family. In terms of assembly, homodimer. Interacts (via the coiled-coil region) with host ZC3H7B (via LD motif). Interacts with host EIF4G1.

It is found in the host cytoplasm. Plays an important role in stimulating the translation of viral mRNAs. These mRNAs are capped but not polyadenylated, instead terminating in a conserved sequence 'GACC' at the 3' that is recognized by NSP3, which competes with host PABPC1 for EIF4G1 binding. The interaction between NSP3 and host EIF4G1 stabilizes the EIF4E-EIF4G1 interaction, thereby facilitating the initiation of capped mRNA translation. The chain is Non-structural protein 3 from Homo sapiens (Human).